A 1623-amino-acid polypeptide reads, in one-letter code: RING finger protein 17 (1623 aa).

Positions Met1–Ser22 are disordered. Residues Cys32 to Glu75 form an RING-type zinc finger. Position 234 is an N6-acetyllysine (Lys234). 3 consecutive Tudor domains span residues Cys726 to Ala784, Lys962 to Met1021, and Phe1228 to Pro1285. Positions Asn1438–Glu1462 are disordered. Residues Asp1479–Tyr1539 enclose the Tudor 4 domain.

Interacts with MXD1, MXD3, MXD4, MXI1 and PIWIL1. Self-associates. Testis specific.

The protein localises to the cytoplasm. Its subcellular location is the nucleus. Seems to be involved in regulation of transcriptional activity of MYC. In vitro, inhibits DNA-binding activity of Mad-MAX heterodimers. Can recruit Mad transcriptional repressors (MXD1, MXD3, MXD4 and MXI1) to the cytoplasm. May be involved in spermiogenesis. In Homo sapiens (Human), this protein is RING finger protein 17 (RNF17).